We begin with the raw amino-acid sequence, 852 residues long: MSRYSATEIEAKWQEAWDKAGIFRAARTADKPKYYVLEMFPYPSGRIHIGHVRNYTMGDVIARYKLSNGFNVLHPMGFDAFGMPAENAAMASGGHPKDWTYKNIETMVAQMKPLGFGLDWSRMFATCDPEYYGQQQALFLDFLEKGLVYRKNAVVNWDPVDMTVLANEQVEDGRGWRSGALVERRELTQWFFKISDMSGELLDALDTLDDWPAKVKLMQANWIGKSRGLQFSWALTEPAHGIEALDVYTTRPDTLMGASFLGISPDHPLTKALEAENPDLAAKVAEMRKGGTTEEAIEKAEKLGADTGLRVRHPLNPDWELPVWVANFILMDYGTGAIFACPAHDQRDLDFCRKYDLPVIDTFVALDDPKPIATEAFVPLKTEKVKWIDHFAGLDVATGQEAIDTTIDWMEAKGLGTGVTKFRLRDWGLSRQRYWGCPIPVVHCDACGVVPEKKENLPIRLPDDVTFDVPGNPLDRHPTWRDCACPSCGKPARRETDTMDTFVDSSWYFARFTAPRAETPTDMAEAEYWMNVDQYIGGIEHAILHLLYSRFFARAMHICGHLPEKSKEPFNALFTQGMVTHAIYKTTGADDRPVYHYPEAVRLEGGKGYLEDGTEVEIIPSAKMSKSKNNVVDPVAIIDRFGADTARWFVLSDSPPERDVEWTDAGAEAAHKHLNRVWNLCDRIAAMDSAAPGEGDDDLLREMHKCIRDVTNGIESFGFNASIAKLYAFTNTLAKSKAGAAAQKQAIMTLAQLMSPMTPHLAEDIWAHQGGEGLIAAAPWPVADEAMLVDALVTLPVQINGKRRAEISVPADMDKTQVEKLALSTDAVQKALDGAAPKKVIVVPGRIVNVVV.

The 'HIGH' region signature appears at 41–51 (PYPSGRIHIGH). Positions 623 to 627 (KMSKS) match the 'KMSKS' region motif. Lysine 626 is an ATP binding site.

The protein belongs to the class-I aminoacyl-tRNA synthetase family.

The protein resides in the cytoplasm. The catalysed reaction is tRNA(Leu) + L-leucine + ATP = L-leucyl-tRNA(Leu) + AMP + diphosphate. In Ruegeria pomeroyi (strain ATCC 700808 / DSM 15171 / DSS-3) (Silicibacter pomeroyi), this protein is Leucine--tRNA ligase.